Here is an 817-residue protein sequence, read N- to C-terminus: MMDGPRSDVGRWGGNPLQPPTTPSPEPEPEPDGRSRRGGGRSFWARCCGCCSCRNAADDDWGPEPSDSRGRGSSSGTRRPGSRGSDSRRPVSRGSGVNAAGDGTIREGMLVVNGVDLLSSRSDQNRREHHTDEYEYDELIVRRGQPFHMLLLLSRTYESSDRITLELLIGNNPEVGKGTHVIIPVGKGGSGGWKAQVVKASGQNLNLRVHTSPNAIIGKFQFTVRTQSDAGEFQLPFDPRNEIYILFNPWCPEDIVYVDHEDWRQEYVLNESGRIYYGTEAQIGERTWNYGQFDHGVLDACLYILDRRGMPYGGRGDPVNVSRVISAMVNSLDDNGVLIGNWSGDYSRGTNPSAWVGSVEILLSYLRTGYSVPYGQCWVFAGVTTTVLRCLGLATRTVTNFNSAHDTDTSLTMDIYFDENMKPLEHLNHDSVWNFHVWNDCWMKRPDLPSGFDGWQVVDATPQETSSGIFCCGPCSVESIKNGLVYMKYDTPFIFAEVNSDKVYWQRQDDGSFKIVYVEEKAIGTLIVTKAISSNMREDITYLYKHPEGSDAERKAVETAAAHGSKPNVYANRGSAEDVAMQVEAQDAVMGQDLMVSVMLINHSSSRRTVKLHLYLSVTFYTGVSGTIFKETKKEVELAPGASDRVTMPVAYKEYRPHLVDQGAMLLNVSGHVKESGQVLAKQHTFRLRTPDLSLTLLGAAVVGQECEVQIVFKNPLPVTLTNVVFRLEGSGLQRPKILNVGDIGGNETVTLRQSFVPVRPGPRQLIASLDSPQLSQVHGVIQVDVAPAPGDGGFFSDAGGDSHLGETIPMASRGGA.

Disordered stretches follow at residues 1-38 and 59-105; these read MMDGPRSDVGRWGGNPLQPPTTPSPEPEPEPDGRSRRG and DDWG…DGTI. The tract at residues 1–100 is membrane anchorage region; it reads MMDGPRSDVG…VSRGSGVNAA (100 aa). Residues 17-26 show a composition bias toward pro residues; that stretch reads LQPPTTPSPE. Residue Thr22 is modified to Phosphothreonine. Phosphoserine is present on residues Ser24, Ser68, Ser82, Ser85, Ser92, and Ser95. Residues 71–84 are compositionally biased toward low complexity; sequence RGSSSGTRRPGSRG. Catalysis depends on residues Cys377, His436, and Asp459. Positions 499, 501, 548, and 553 each coordinate Ca(2+). Residues 793–817 are disordered; that stretch reads GGFFSDAGGDSHLGETIPMASRGGA.

Belongs to the transglutaminase superfamily. Transglutaminase family. In terms of assembly, interacts with PLAAT4. Ca(2+) serves as cofactor. Palmitoylated. Post-translationally, the membrane anchorage region possesses a cluster of five cysteines within which fatty acid(s) may become thioester-linked. It is subject to phorbol ester-stimulated phosphorylation and is hypersensitive to proteolysis, which releases the enzyme in a soluble form. In terms of processing, tyrosine-phosphorylated.

Its subcellular location is the membrane. The catalysed reaction is L-glutaminyl-[protein] + L-lysyl-[protein] = [protein]-L-lysyl-N(6)-5-L-glutamyl-[protein] + NH4(+). Functionally, catalyzes the cross-linking of proteins and the conjugation of polyamines to proteins. Responsible for cross-linking epidermal proteins during formation of the stratum corneum. Involved in cell proliferation. The chain is Protein-glutamine gamma-glutamyltransferase K (TGM1) from Homo sapiens (Human).